An 810-amino-acid chain; its full sequence is LPS-assembly protein LptD (810 aa).

A signal peptide spans 1-29; the sequence is MTKWTLGYSYPIALTISLIPALTPAIVQA.

Belongs to the LptD family. In terms of assembly, component of the lipopolysaccharide transport and assembly complex. Interacts with LptE and LptA.

The protein localises to the cell outer membrane. In terms of biological role, together with LptE, is involved in the assembly of lipopolysaccharide (LPS) at the surface of the outer membrane. This Aeromonas salmonicida (strain A449) protein is LPS-assembly protein LptD.